The primary structure comprises 87 residues: Small ribosomal subunit protein uS17 (87 aa).

It belongs to the universal ribosomal protein uS17 family. Part of the 30S ribosomal subunit.

In terms of biological role, one of the primary rRNA binding proteins, it binds specifically to the 5'-end of 16S ribosomal RNA. The sequence is that of Small ribosomal subunit protein uS17 from Staphylococcus aureus (strain Mu3 / ATCC 700698).